The primary structure comprises 136 residues: Ribosome-binding factor A (136 aa).

The protein belongs to the RbfA family. Monomer. Binds 30S ribosomal subunits, but not 50S ribosomal subunits or 70S ribosomes.

The protein resides in the cytoplasm. In terms of biological role, one of several proteins that assist in the late maturation steps of the functional core of the 30S ribosomal subunit. Associates with free 30S ribosomal subunits (but not with 30S subunits that are part of 70S ribosomes or polysomes). Required for efficient processing of 16S rRNA. May interact with the 5'-terminal helix region of 16S rRNA. The protein is Ribosome-binding factor A of Cellvibrio japonicus (strain Ueda107) (Pseudomonas fluorescens subsp. cellulosa).